A 308-amino-acid chain; its full sequence is Protoheme IX farnesyltransferase (308 aa).

The next 9 membrane-spanning stretches (helical) occupy residues 31–51 (VGIV…AFYF), 60–80 (LDIV…SCVI), 110–130 (ALWF…MTNL), 131–151 (TAAG…TMWS), 157–177 (VNTI…WTAV), 185–205 (AWVL…ALAI), 232–252 (IIIW…LGLP), 253–273 (IVIL…VGYR), and 285–305 (FVYS…FTLF).

Belongs to the UbiA prenyltransferase family. Protoheme IX farnesyltransferase subfamily. As to quaternary structure, interacts with CtaA.

The protein resides in the cell membrane. It carries out the reaction heme b + (2E,6E)-farnesyl diphosphate + H2O = Fe(II)-heme o + diphosphate. It participates in porphyrin-containing compound metabolism; heme O biosynthesis; heme O from protoheme: step 1/1. Converts heme B (protoheme IX) to heme O by substitution of the vinyl group on carbon 2 of heme B porphyrin ring with a hydroxyethyl farnesyl side group. The polypeptide is Protoheme IX farnesyltransferase (Bacillus licheniformis (strain ATCC 14580 / DSM 13 / JCM 2505 / CCUG 7422 / NBRC 12200 / NCIMB 9375 / NCTC 10341 / NRRL NRS-1264 / Gibson 46)).